Here is a 523-residue protein sequence, read N- to C-terminus: Pentatricopeptide repeat-containing protein At1g64580 (523 aa).

13 PPR repeats span residues 43–77 (HHHH…RPIP), 78–112 (SIVD…GISH), 113–147 (DLYS…GFRP), 148–182 (SIVT…GFVP), 183–217 (NVVI…GIRA), 218–252 (DAVT…KIDP), 253–287 (NVIF…SVVP), 288–322 (NVFT…GCFP), 323–357 (DVVT…GLVG), 358–392 (DAFT…GVSP), 393–427 (DIVT…EMDV), 428–462 (DIIT…GVKP), and 463–497 (DAIA…GFMP).

It belongs to the PPR family. P subfamily.

In Arabidopsis thaliana (Mouse-ear cress), this protein is Pentatricopeptide repeat-containing protein At1g64580.